The following is a 495-amino-acid chain: Flagellin (495 aa).

The protein belongs to the bacterial flagellin family.

The protein localises to the secreted. Its subcellular location is the bacterial flagellum. Flagellin is the subunit protein which polymerizes to form the filaments of bacterial flagella. This Salmonella typhimurium (strain LT2 / SGSC1412 / ATCC 700720) protein is Flagellin (fliC).